A 406-amino-acid chain; its full sequence is Cysteine desulfurase (406 aa).

At Lys-226 the chain carries N6-(pyridoxal phosphate)lysine. The active-site Cysteine persulfide intermediate is the Cys-364.

Belongs to the class-V pyridoxal-phosphate-dependent aminotransferase family. Csd subfamily. In terms of assembly, homodimer. Interacts with SufE and the SufBCD complex composed of SufB, SufC and SufD. The interaction with SufE is required to mediate the direct transfer of the sulfur atom from the S-sulfanylcysteine. Pyridoxal 5'-phosphate is required as a cofactor.

It localises to the cytoplasm. The catalysed reaction is (sulfur carrier)-H + L-cysteine = (sulfur carrier)-SH + L-alanine. It carries out the reaction L-selenocysteine + AH2 = hydrogenselenide + L-alanine + A + H(+). It participates in cofactor biosynthesis; iron-sulfur cluster biosynthesis. Cysteine desulfurases mobilize the sulfur from L-cysteine to yield L-alanine, an essential step in sulfur metabolism for biosynthesis of a variety of sulfur-containing biomolecules. Component of the suf operon, which is activated and required under specific conditions such as oxidative stress and iron limitation. Acts as a potent selenocysteine lyase in vitro, that mobilizes selenium from L-selenocysteine. Selenocysteine lyase activity is however unsure in vivo. The polypeptide is Cysteine desulfurase (Escherichia coli (strain SE11)).